The primary structure comprises 68 residues: Non-specific lipid-transfer protein 2 (68 aa).

This sequence belongs to the plant LTP family.

In terms of biological role, plant non-specific lipid-transfer proteins transfer phospholipids as well as galactolipids across membranes. May play a role in wax or cutin deposition in the cell walls of expanding epidermal cells and certain secretory tissues. The polypeptide is Non-specific lipid-transfer protein 2 (Prunus armeniaca (Apricot)).